The sequence spans 85 residues: MKVSVLITLAVLGVMFVWASAAELEERGSDQRDSPAWLKSMERIFQSEERECRKMFGGCSVDSDCCAHLGCKPTLKYCAWDLTFP.

Positions 1–21 (MKVSVLITLAVLGVMFVWASA) are cleaved as a signal peptide. A propeptide spanning residues 22–51 (AELEERGSDQRDSPAWLKSMERIFQSEERE) is cleaved from the precursor. 3 disulfides stabilise this stretch: Cys52–Cys66, Cys59–Cys71, and Cys65–Cys78.

This sequence belongs to the neurotoxin 10 (Hwtx-1) family. 28 (Jztx-11) subfamily. Expressed by the venom gland.

The protein localises to the secreted. Probable ion channel inhibitor. This is Kappa-theraphotoxin-Cg1d from Chilobrachys guangxiensis (Chinese earth tiger tarantula).